Here is a 399-residue protein sequence, read N- to C-terminus: Transcription termination factor 1, mitochondrial (399 aa).

Residues 1–57 constitute a mitochondrion transit peptide; sequence MQSLSLGQTSISKGLNYLTIMAPGNLWHMRNNFLFGSRCWMTRFSAENIFKSVSFRL. 5 interaction with DNA regions span residues 169 to 170, 247 to 251, 324 to 331, 355 to 358, and 384 to 391; these read RS, QSTKR, AEKKFNDK, SIST, and SKKRYEAK.

Belongs to the mTERF family. In terms of assembly, monomer. Phosphoprotein with mostly four phosphate groups. While the DNA-binding activity is unaffected by the phosphorylation state, only the phosphorylated form of the protein is active for termination activity. Functioning seems to be regulated by phosphorylation.

It is found in the mitochondrion. Transcription termination factor. Binds to a 28 bp region within the tRNA(Leu(uur)) gene at a position immediately adjacent to and downstream of the 16S rRNA gene; this region comprises a tridecamer sequence critical for directing accurate termination. Binds DNA along the major grove and promotes DNA bending and partial unwinding. Promotes base flipping. Transcription termination activity appears to be polarized with highest specificity for transcripts initiated on the light strand. In Homo sapiens (Human), this protein is Transcription termination factor 1, mitochondrial (MTERF1).